The following is a 642-amino-acid chain: Threonine--tRNA ligase (642 aa).

The region spanning 1 to 61 (MPVITLPDGS…ENDATLSIIT (61 aa)) is the TGS domain. Residues 243-534 (DHRKIGKQLD…LTEEFAGFFP (292 aa)) are catalytic. Cysteine 334, histidine 385, and histidine 511 together coordinate Zn(2+).

Belongs to the class-II aminoacyl-tRNA synthetase family. As to quaternary structure, homodimer. It depends on Zn(2+) as a cofactor.

It localises to the cytoplasm. It catalyses the reaction tRNA(Thr) + L-threonine + ATP = L-threonyl-tRNA(Thr) + AMP + diphosphate + H(+). Its function is as follows. Catalyzes the attachment of threonine to tRNA(Thr) in a two-step reaction: L-threonine is first activated by ATP to form Thr-AMP and then transferred to the acceptor end of tRNA(Thr). Also edits incorrectly charged L-seryl-tRNA(Thr). This chain is Threonine--tRNA ligase, found in Salmonella paratyphi A (strain ATCC 9150 / SARB42).